Reading from the N-terminus, the 168-residue chain is Shikimate kinase (168 aa).

11–16 (GAGKTT) is an ATP binding site. Thr15 provides a ligand contact to Mg(2+). Substrate contacts are provided by Asp33, Arg57, and Gly78. Arg118 is an ATP binding site. Arg136 contributes to the substrate binding site. Arg153 is a binding site for ATP.

The protein belongs to the shikimate kinase family. Monomer. It depends on Mg(2+) as a cofactor.

The protein resides in the cytoplasm. It carries out the reaction shikimate + ATP = 3-phosphoshikimate + ADP + H(+). It participates in metabolic intermediate biosynthesis; chorismate biosynthesis; chorismate from D-erythrose 4-phosphate and phosphoenolpyruvate: step 5/7. Its function is as follows. Catalyzes the specific phosphorylation of the 3-hydroxyl group of shikimic acid using ATP as a cosubstrate. This Enterococcus faecalis (strain ATCC 700802 / V583) protein is Shikimate kinase.